Consider the following 148-residue polypeptide: Nucleoside diphosphate kinase 1 (148 aa).

Positions 9, 57, 85, 91, 102, and 112 each coordinate ATP. The Pros-phosphohistidine intermediate role is filled by histidine 115.

Belongs to the NDK family. Requires Mg(2+) as cofactor.

It carries out the reaction a 2'-deoxyribonucleoside 5'-diphosphate + ATP = a 2'-deoxyribonucleoside 5'-triphosphate + ADP. It catalyses the reaction a ribonucleoside 5'-diphosphate + ATP = a ribonucleoside 5'-triphosphate + ADP. Major role in the synthesis of nucleoside triphosphates other than ATP. The ATP gamma phosphate is transferred to the NDP beta phosphate via a ping-pong mechanism, using a phosphorylated active-site intermediate. The chain is Nucleoside diphosphate kinase 1 (NDKP1) from Mesembryanthemum crystallinum (Common ice plant).